A 538-amino-acid polypeptide reads, in one-letter code: MVKQLKFSEDARQAMLRGVDQLANAVKVTIGPKGRNVVLDKEFTAPLITNDGVTIAKEIELEDPYENMGAKLVQEVANKTNEIAGDGTTTATVLAQAMIQEGLKNVTSGANPVGLRQGIDKAVKVAVEALHENSQKVENKNEIAQVGAISAADEEIGRYISEAMEKVGNDGVITIEESNGLNTELEVVEGMQFDRGYQSPYMVTDSDKMVAELERPYILVTDKKISSFQDILPLLEQVVQSNRPILIVADEVEGDALTNIVLNRMRGTFTAVAVKAPGFGDRRKAMLEDLAILTGAQVITDDLGLDLKDASIDMLGTASKVEVTKDNTTVVDGDGDENSIDARVSQLKSQIEETESDFDREKLQERLAKLAGGVAVIKVGAASETELKERKLRIEDALNSTRAAVEEGIVAGGGTALVNVYQKVSEIEAEGDIETGVNIVLKALTAPVRQIAENAGLEGSVIVERLKNAEPGVGFNAATNEWVNMLEEGIVDPTKVTRSALQHAASVAAMFLTTEAVVASIPEKNNDQPNMGGMPGMM.

Residues 29-32, 86-90, G413, 476-478, and D492 contribute to the ATP site; these read TIGP, DGTTT, and NAA.

The protein belongs to the chaperonin (HSP60) family. Forms a cylinder of 14 subunits composed of two heptameric rings stacked back-to-back. Interacts with the co-chaperonin GroES.

It is found in the cytoplasm. The catalysed reaction is ATP + H2O + a folded polypeptide = ADP + phosphate + an unfolded polypeptide.. In terms of biological role, together with its co-chaperonin GroES, plays an essential role in assisting protein folding. The GroEL-GroES system forms a nano-cage that allows encapsulation of the non-native substrate proteins and provides a physical environment optimized to promote and accelerate protein folding. This chain is Chaperonin GroEL, found in Staphylococcus aureus (strain USA300).